Consider the following 1459-residue polypeptide: Mediator of RNA polymerase II transcription subunit 14 (1459 aa).

Residues 1–37 (MAPVQLDNHQLIPPGGGGGSSGGGGSSSGSASAPAPP) are disordered. Residues 14-27 (PGGGGGSSGGGGSS) are compositionally biased toward gly residues. Positions 75–79 (LTDLL) match the LXXLL motif 1 motif. An interaction with STAT2 region spans residues 194-572 (KQATLHQLNQ…VPNKPTQLSY (379 aa)). Residues 506–830 (LGQQRCKQSI…TKGSSISIQW (325 aa)) are interaction with SREBF1. 2 positions are modified to phosphoserine: Ser-623 and Ser-992. Residues 979-1171 (ARRRSVNEDD…NMPPPRKLPQ (193 aa)) form a disordered region. 2 stretches are compositionally biased toward polar residues: residues 1029–1059 (PPTS…SSPS) and 1097–1106 (DPSSPYTMVS). 5 positions are modified to phosphoserine: Ser-1117, Ser-1124, Ser-1133, Ser-1141, and Ser-1149. Residues 1152–1161 (AGTSSQTMPT) show a composition bias toward polar residues. Residues 1187–1191 (LNILL) carry the LXXLL motif 2 motif.

Belongs to the Mediator complex subunit 14 family. As to quaternary structure, component of the Mediator complex, which is composed of MED1, MED4, MED6, MED7, MED8, MED9, MED10, MED11, MED12, MED13, MED13L, MED14, MED15, MED16, MED17, MED18, MED19, MED20, MED21, MED22, MED23, MED24, MED25, MED26, MED27, MED29, MED30, MED31, CCNC, CDK8 and CDC2L6/CDK11. The MED12, MED13, CCNC and CDK8 subunits form a distinct module termed the CDK8 module. Mediator containing the CDK8 module is less active than Mediator lacking this module in supporting transcriptional activation. Individual preparations of the Mediator complex lacking one or more distinct subunits have been variously termed ARC, CRSP, DRIP, PC2, SMCC and TRAP. Interacts with AR, ESR1, SREBF1 and STAT2. Interacts with GATA1.

It localises to the nucleus. Its function is as follows. Component of the Mediator complex, a coactivator involved in the regulated transcription of nearly all RNA polymerase II-dependent genes. Mediator functions as a bridge to convey information from gene-specific regulatory proteins to the basal RNA polymerase II transcription machinery. Mediator is recruited to promoters by direct interactions with regulatory proteins and serves as a scaffold for the assembly of a functional preinitiation complex with RNA polymerase II and the general transcription factors. The protein is Mediator of RNA polymerase II transcription subunit 14 (Med14) of Mus musculus (Mouse).